A 382-amino-acid chain; its full sequence is Anhydro-N-acetylmuramic acid kinase (382 aa).

22 to 29 is an ATP binding site; the sequence is GTSMDGVD.

This sequence belongs to the anhydro-N-acetylmuramic acid kinase family.

The enzyme catalyses 1,6-anhydro-N-acetyl-beta-muramate + ATP + H2O = N-acetyl-D-muramate 6-phosphate + ADP + H(+). It participates in amino-sugar metabolism; 1,6-anhydro-N-acetylmuramate degradation. Its pathway is cell wall biogenesis; peptidoglycan recycling. Functionally, catalyzes the specific phosphorylation of 1,6-anhydro-N-acetylmuramic acid (anhMurNAc) with the simultaneous cleavage of the 1,6-anhydro ring, generating MurNAc-6-P. Is required for the utilization of anhMurNAc either imported from the medium or derived from its own cell wall murein, and thus plays a role in cell wall recycling. The protein is Anhydro-N-acetylmuramic acid kinase of Burkholderia orbicola (strain MC0-3).